A 439-amino-acid polypeptide reads, in one-letter code: Serine hydroxymethyltransferase (439 aa).

(6S)-5,6,7,8-tetrahydrofolate-binding positions include Leu119 and 123-125 (GHL). N6-(pyridoxal phosphate)lysine is present on Lys228. 370 to 372 (SPF) is a binding site for (6S)-5,6,7,8-tetrahydrofolate.

The protein belongs to the SHMT family. Homodimer. The cofactor is pyridoxal 5'-phosphate.

It is found in the cytoplasm. The catalysed reaction is (6R)-5,10-methylene-5,6,7,8-tetrahydrofolate + glycine + H2O = (6S)-5,6,7,8-tetrahydrofolate + L-serine. The protein operates within one-carbon metabolism; tetrahydrofolate interconversion. Its pathway is amino-acid biosynthesis; glycine biosynthesis; glycine from L-serine: step 1/1. Functionally, catalyzes the reversible interconversion of serine and glycine with tetrahydrofolate (THF) serving as the one-carbon carrier. This reaction serves as the major source of one-carbon groups required for the biosynthesis of purines, thymidylate, methionine, and other important biomolecules. Also exhibits THF-independent aldolase activity toward beta-hydroxyamino acids, producing glycine and aldehydes, via a retro-aldol mechanism. In Chlorobium phaeobacteroides (strain BS1), this protein is Serine hydroxymethyltransferase.